Here is a 149-residue protein sequence, read N- to C-terminus: Down syndrome critical region protein 9 (149 aa).

Positions M1–P41 are disordered.

This Pan troglodytes (Chimpanzee) protein is Down syndrome critical region protein 9 (DSCR9).